The primary structure comprises 417 residues: MAQKEGGRTVPCCSRPKVAALTAGTLLLLTAIGAASWAIVAVLLRSDQEPLYPVQVSSADARLMVFDKTEGTWRLLCSSRSNARVAGLSCEEMGFLRALTHSELDVRTAGANGTSGFFCVDEGRLPHTQRLLEVISVCDCPRGRFLAAICQDCGRRKLPVDRIVGGRDTSLGRWPWQVSLRYDGAHLCGGSLLSGDWVLTAAHCFPERNRVLSRWRVFAGAVAQASPHGLQLGVQAVVYHGGYLPFRDPNSEENSNDIALVHLSSPLPLTEYIQPVCLPAAGQALVDGKICTVTGWGNTQYYGQQAGVLQEARVPIISNDVCNGADFYGNQIKPKMFCAGYPEGGIDACQGDSGGPFVCEDSISRTPRWRLCGIVSWGTGCALAQKPGVYTKVSDFREWIFQAIKTHSEASGMVTQL.

Topologically, residues 1 to 23 are cytoplasmic; it reads MAQKEGGRTVPCCSRPKVAALTA. The chain crosses the membrane as a helical; Signal-anchor for type II membrane protein span at residues 24-44; it reads GTLLLLTAIGAASWAIVAVLL. Residues 45 to 417 are Extracellular-facing; the sequence is RSDQEPLYPV…SEASGMVTQL (373 aa). In terms of domain architecture, SRCR spans 54–151; the sequence is VQVSSADARL…RGRFLAAICQ (98 aa). 8 disulfides stabilise this stretch: cysteine 77–cysteine 140, cysteine 90–cysteine 150, cysteine 119–cysteine 138, cysteine 153–cysteine 277, cysteine 188–cysteine 204, cysteine 291–cysteine 359, cysteine 322–cysteine 338, and cysteine 349–cysteine 381. Asparagine 112 is a glycosylation site (N-linked (GlcNAc...) asparagine). The region spanning 163-405 is the Peptidase S1 domain; sequence IVGGRDTSLG…FREWIFQAIK (243 aa). Catalysis depends on charge relay system residues histidine 203 and aspartate 257. Serine 353 acts as the Charge relay system in catalysis.

The protein belongs to the peptidase S1 family. In terms of tissue distribution, detected in liver and kidney.

It localises to the cell membrane. The protein localises to the apical cell membrane. It carries out the reaction Cleavage after basic amino-acid residues, with Arg strongly preferred to Lys.. In terms of biological role, serine protease that cleaves extracellular substrates, and contributes to the proteolytic processing of growth factors, such as HGF and MST1/HGFL. Plays a role in cell growth and maintenance of cell morphology. Plays a role in the proteolytic processing of ACE2. Mediates the proteolytic cleavage of urinary UMOD that is required for UMOD polymerization. In Homo sapiens (Human), this protein is Serine protease hepsin (HPN).